The primary structure comprises 193 residues: Ion-translocating oxidoreductase complex subunit A (193 aa).

Transmembrane regions (helical) follow at residues 5-25, 39-59, 63-83, 102-122, 134-154, and 171-191; these read LLLF…FLGL, MGMG…AWLI, ILIP…VIAV, LLGI…VALL, ALYG…FAAI, and AIAL…SGLV.

Belongs to the NqrDE/RnfAE family. As to quaternary structure, the complex is composed of six subunits: RsxA, RsxB, RsxC, RsxD, RsxE and RsxG.

The protein resides in the cell inner membrane. Its function is as follows. Part of a membrane-bound complex that couples electron transfer with translocation of ions across the membrane. Required to maintain the reduced state of SoxR. The protein is Ion-translocating oxidoreductase complex subunit A of Shigella boydii serotype 18 (strain CDC 3083-94 / BS512).